A 269-amino-acid polypeptide reads, in one-letter code: Formamidopyrimidine-DNA glycosylase (269 aa).

Pro-2 serves as the catalytic Schiff-base intermediate with DNA. The Proton donor role is filled by Glu-3. The active-site Proton donor; for beta-elimination activity is the Lys-57. Residues His-90, Arg-109, and Lys-150 each coordinate DNA. The FPG-type zinc finger occupies 235–269 (QVYGRHGEPCYTCGEFIQIAKYGQRSSFFCPSCQN). Catalysis depends on Arg-259, which acts as the Proton donor; for delta-elimination activity.

Belongs to the FPG family. As to quaternary structure, monomer. The cofactor is Zn(2+).

It catalyses the reaction Hydrolysis of DNA containing ring-opened 7-methylguanine residues, releasing 2,6-diamino-4-hydroxy-5-(N-methyl)formamidopyrimidine.. It carries out the reaction 2'-deoxyribonucleotide-(2'-deoxyribose 5'-phosphate)-2'-deoxyribonucleotide-DNA = a 3'-end 2'-deoxyribonucleotide-(2,3-dehydro-2,3-deoxyribose 5'-phosphate)-DNA + a 5'-end 5'-phospho-2'-deoxyribonucleoside-DNA + H(+). In terms of biological role, involved in base excision repair of DNA damaged by oxidation or by mutagenic agents. Acts as a DNA glycosylase that recognizes and removes damaged bases. Has a preference for oxidized purines, such as 7,8-dihydro-8-oxoguanine (8-oxoG). Has AP (apurinic/apyrimidinic) lyase activity and introduces nicks in the DNA strand. Cleaves the DNA backbone by beta-delta elimination to generate a single-strand break at the site of the removed base with both 3'- and 5'-phosphates. The polypeptide is Formamidopyrimidine-DNA glycosylase (Baumannia cicadellinicola subsp. Homalodisca coagulata).